The primary structure comprises 365 residues: Magnesium-chelatase subunit ChlI homolog (365 aa).

40-47 (EKGTAKST) contributes to the ATP binding site. The interval 340–365 (FKQQNNKDNEEKEEHKDDDVKKNMMK) is disordered. The segment covering 344–365 (NNKDNEEKEEHKDDDVKKNMMK) has biased composition (basic and acidic residues).

The protein belongs to the Mg-chelatase subunits D/I family.

The sequence is that of Magnesium-chelatase subunit ChlI homolog from Methanocaldococcus jannaschii (strain ATCC 43067 / DSM 2661 / JAL-1 / JCM 10045 / NBRC 100440) (Methanococcus jannaschii).